The following is a 317-amino-acid chain: Malate dehydrogenase (317 aa).

NAD(+)-binding positions include 10–15 (GGGQIG) and D34. Substrate contacts are provided by R83 and R89. NAD(+) contacts are provided by residues N96 and 119-121 (ISN). The substrate site is built by N121 and R152. H176 functions as the Proton acceptor in the catalytic mechanism.

Belongs to the LDH/MDH superfamily. MDH type 3 family.

It carries out the reaction (S)-malate + NAD(+) = oxaloacetate + NADH + H(+). Its function is as follows. Catalyzes the reversible oxidation of malate to oxaloacetate. The chain is Malate dehydrogenase from Geobacter metallireducens (strain ATCC 53774 / DSM 7210 / GS-15).